The sequence spans 141 residues: MAKRGPKTVGVSYRLGLTPGVFMESLVKVADNSGATLAKVIGVPHYKAVWRRIPGAAVGDIVIVSIRAGKPELRKQVMRAIVIRQRRPYRRPDGSWIAFEDNAVVIITPEGEPKGTEIRGPLAKEAAERWPKLSAMASIIV.

This sequence belongs to the universal ribosomal protein uL14 family. In terms of assembly, part of the 50S ribosomal subunit. Forms a cluster with proteins L3 and L24e, part of which may contact the 16S rRNA in 2 intersubunit bridges.

Its function is as follows. Binds to 23S rRNA. Forms part of two intersubunit bridges in the 70S ribosome. This chain is Large ribosomal subunit protein uL14, found in Thermofilum pendens (strain DSM 2475 / Hrk 5).